Here is a 324-residue protein sequence, read N- to C-terminus: Beta-ketoacyl-[acyl-carrier-protein] synthase III (324 aa).

Active-site residues include Cys-112 and His-249. The ACP-binding stretch occupies residues 250–254 (QANRR). The active site involves Asn-279.

This sequence belongs to the thiolase-like superfamily. FabH family. In terms of assembly, homodimer.

Its subcellular location is the cytoplasm. The catalysed reaction is malonyl-[ACP] + acetyl-CoA + H(+) = 3-oxobutanoyl-[ACP] + CO2 + CoA. It functions in the pathway lipid metabolism; fatty acid biosynthesis. Catalyzes the condensation reaction of fatty acid synthesis by the addition to an acyl acceptor of two carbons from malonyl-ACP. Catalyzes the first condensation reaction which initiates fatty acid synthesis and may therefore play a role in governing the total rate of fatty acid production. Possesses both acetoacetyl-ACP synthase and acetyl transacylase activities. Its substrate specificity determines the biosynthesis of branched-chain and/or straight-chain of fatty acids. The chain is Beta-ketoacyl-[acyl-carrier-protein] synthase III from Streptococcus equi subsp. equi (strain 4047).